The sequence spans 344 residues: uncharacterized protein (344 aa).

The next 5 helical transmembrane spans lie at 53 to 73 (FVVG…VSVW), 84 to 104 (WPIL…GYNI), 153 to 173 (IYPL…LYLL), 189 to 209 (FGAW…LEML), and 275 to 295 (IASE…VGVF).

The protein belongs to the steroid 5-alpha reductase family.

It localises to the endoplasmic reticulum membrane. This is an uncharacterized protein from Schizosaccharomyces pombe (strain 972 / ATCC 24843) (Fission yeast).